We begin with the raw amino-acid sequence, 227 residues long: Ubiquitin domain-containing protein 1 (227 aa).

The interval 1 to 35 (MGNCVGRQRRERPAAPGHPRKRAGRNEPLKKERLK) is disordered. Positions 24 to 35 (GRNEPLKKERLK) are enriched in basic and acidic residues. Residues 149–224 (FPLKVRLSTG…IQVIINQPPP (76 aa)) form the Ubiquitin-like domain.

Interacts with UBTD1.

May be involved in the regulation of cellular senescence through a positive feedback loop with TP53. Is a TP53 downstream target gene that increases the stability of TP53 protein by promoting the ubiquitination and degradation of MDM2. This Rattus norvegicus (Rat) protein is Ubiquitin domain-containing protein 1 (Ubtd1).